We begin with the raw amino-acid sequence, 354 residues long: Divinyl chlorophyll a/b light-harvesting protein PcbG (354 aa).

6 consecutive transmembrane segments (helical) span residues 27-47 (FIAA…ASTL), 65-85 (IFLA…VWTG), 88-108 (VASV…GALS), 201-221 (VLGG…FHIA), 241-261 (AVLS…AFWC), and 308-328 (LTNV…WHAI).

It belongs to the PsbB/PsbC family. IsiA/Pcb subfamily. In terms of assembly, the antenna complex consists of divinyl chlorophylls (a and b) and divinyl chlorophyll a/b binding proteins and binds more divinyl chlorophyll b than does the antenna complex from high-light-adapted Prochlorococcus. Divinyl chlorophyll a is required as a cofactor. The cofactor is divinyl chlorophyll b.

It is found in the cellular thylakoid membrane. Functionally, the antenna complex functions as a light receptor, it captures and delivers excitation energy to photosystems II and I. The Prochlorales pcb genes are not related to higher plant LHCs. In Prochlorococcus marinus (strain NATL2A), this protein is Divinyl chlorophyll a/b light-harvesting protein PcbG (pcbG).